Reading from the N-terminus, the 74-residue chain is Alpha-conotoxin GeXIVA (74 aa).

The N-terminal stretch at 1–22 (MKLTCVLIITVLFLTACQLTTA) is a signal peptide. The propeptide occupies 23-46 (VTYSRGEHKHRALMSTGTNYRLPK). Residues 56–64 (RSPYDRRRR) are interacts with alpha-9-alpha-10 (CHRNA9-CHRNA10) nAChR.

It belongs to the conotoxin O1 superfamily. The native disulfide bond pairing has not been studied. Three isomers may exist: the bead isomer (I-II; III-IV), the globular isomer (I-III; II-IV), the ribbon isomer (I-IV; II-III). They have all been synthesized and their activity tested. All of them show similar potency on alpha-9-alpha-10 (CHRNA9-CHRNA10) nAChR, showing that disulfide bonds does not significantly affect their activity. In addition, removal of disulfide bonds does not affect the activity on alpha-9-alpha-10 (CHRNA9-CHRNA10) nAChR either. As to expression, expressed by the venom duct.

The protein localises to the secreted. Its function is as follows. Alpha-conotoxins act on postsynaptic membranes, they bind to the nicotinic acetylcholine receptors (nAChR) and thus inhibit them. This toxin is very potent on alpha-9-alpha-10/CHRNA9-CHRNA10 nAChR (IC(50)=4.61-12 nM for the bead isomer (I-II; III-IV), IC(50)=7-16 nM for the ribbon isomer (I-IV; II-III) and IC(50)=22.7 nM for the globular isomer (I-III; II-IV)). The bead isomer also shows a weak inhibition on other nAChRs (alpha-1-beta-1-delta-epsilon/CHRNA1-CHRNB1-CHRND-CHRNE, alpha-7/CHRNA7, alpha-6/alpha-3-beta-2-beta-3 (CHRNA6/CHRNA3-CHRNB2-CHRNB3), alpha-3-beta-2/CHRNA3-CHRNB2, alpha-2-beta-2/CHRNA2-CHRNB2, alpha-6/alpha-3-beta-4 (CHRNA6/CHRNA3-CHRNB4), alpha-4-beta-2/CHRNA4-CHRNB2, alpha-4-beta-4/CHRNA4-CHRNB4, alpha-2-beta-4/CHRNA2-CHRNB4, alpha-3-beta-4/CHRNA3-CHRNB4). The toxin blockade is voltage-dependent, and its binding site does not overlap with the binding site of the competitive antagonist alpha-conotoxin RgIA. The toxin inhibits Sf9 cell growth. Both the bead and ribbon isomers relieve pain effects in the rat chronic constriction injury (CCI) model of neuropathic pain, and in the acute pain model of tail flick test, but have no effect on motor performance. This Conus generalis (General cone) protein is Alpha-conotoxin GeXIVA.